The following is a 362-amino-acid chain: Melatonin receptor type 1B (362 aa).

The Extracellular portion of the chain corresponds to 1–42 (MSENGSFANCCEAGGWAVRPGWSGAGSARPSRTPRPPWVAPA). N-linked (GlcNAc...) asparagine glycosylation occurs at N4. Residues 43–63 (LSAVLIVTTAVDVVGNLLVIL) traverse the membrane as a helical segment. The Cytoplasmic portion of the chain corresponds to 64–76 (SVLRNRKLRNAGN). A helical transmembrane segment spans residues 77-97 (LFLVSLALADLVVAFYPYPLI). The Extracellular portion of the chain corresponds to 98–115 (LVAIFYDGWALGEEHCKA). A disulfide bridge links C113 with C190. A helical membrane pass occupies residues 116 to 136 (SAFVMGLSVIGSVFNITAIAI). Topologically, residues 137-155 (NRYCYICHSMAYHRIYRRW) are cytoplasmic. The helical transmembrane segment at 156 to 176 (HTPLHICLIWLLTVVALLPNF) threads the bilayer. The melatonin site is built by N175 and Q194. The Extracellular segment spans residues 177 to 200 (FVGSLEYDPRIYSCTFIQTASTQY). Residues 201 to 221 (TAAVVVIHFLLPIAVVSFCYL) form a helical membrane-spanning segment. Residues 222–253 (RIWVLVLQARRKAKPESRLCLKPSDLRSFLTM) are Cytoplasmic-facing. A helical transmembrane segment spans residues 254-274 (FVVFVIFAICWAPLNCIGLAV). The Extracellular portion of the chain corresponds to 275–287 (AINPQEMAPQIPE). The chain crosses the membrane as a helical span at residues 288–308 (GLFVTSYLLAYFNSCLNAIVY). The Cytoplasmic segment spans residues 309–362 (GLLNQNFRREYKRILLALWNPRHCIQDASKGSHAEGLQSPAPPIIGVQHQADAL).

Belongs to the G-protein coupled receptor 1 family. As to quaternary structure, interacts with GPR61, GPR62 and GPR135. Expressed in retina and less in brain and hippocampus.

It is found in the cell membrane. Its function is as follows. High affinity receptor for melatonin. Likely to mediate the reproductive and circadian actions of melatonin. The activity of this receptor is mediated by pertussis toxin sensitive G proteins that inhibit adenylate cyclase activity. In Homo sapiens (Human), this protein is Melatonin receptor type 1B (MTNR1B).